Here is a 74-residue protein sequence, read N- to C-terminus: Amphipathic peptide CT1 (74 aa).

Residues 1–23 (MKTQIVILFISMIMLQMFVQIEG) form the signal peptide. V37 carries the valine amide modification. A propeptide spanning residues 41-74 (GLRNLDDLDDLDLDHLFDSDVSDADLRLLKQMFR) is cleaved from the precursor.

It belongs to the non-disulfide-bridged peptide (NDBP) superfamily. Short antimicrobial peptide (group 4) family. As to expression, expressed by the venom gland.

The protein localises to the secreted. It localises to the target cell membrane. Its function is as follows. Antimicrobial peptide that is rapidly bactericidal against Gram-positive bacteria (MIC=12.5 ug/ml against S.aureus, and MIC=100 ug/ml against M.luteus). Is also active against clinical antibiotics-resistant bacterial strains. The protein is Amphipathic peptide CT1 of Scorpiops tibetanus (Scorpion).